A 336-amino-acid chain; its full sequence is MDLDVVNMFVIAGGTLAIPILAFVASFLLWPSALIRIYYWYWRRTLGMQVRYAHHEDYQFCYSFRGRPGHKPSILMLHGFSAHKDMWLSVVKFLPKNLHLVCVDMPGHEGTTRSSLDDLSIVGQVKRIHQFVECLKLNKKPFHLIGTSMGGHVAGVYAAYYPSDVCSLSLVCPAGLQYSTDNPFVQRLKELEESAAIQKIPLIPSTPEEMSEMLQLCSYVRFKVPQQILQGLVDVRIPHNSFYRKLFLEIVNEKSRYSLHENMDKIKVPTQIIWGKQDQVLDVSGADILAKSISNSQVEVLENCGHSVVMERPRKTAKLIVDFLASVHNTDNKKLN.

Residues 1–8 (MDLDVVNM) lie on the Extracellular side of the membrane. Residues 9-29 (FVIAGGTLAIPILAFVASFLL) form a helical; Signal-anchor for type II membrane protein membrane-spanning segment. Residues 30–336 (WPSALIRIYY…VHNTDNKKLN (307 aa)) lie on the Cytoplasmic side of the membrane. Serine 148 acts as the Nucleophile in catalysis. Catalysis depends on charge relay system residues aspartate 278 and histidine 306.

Belongs to the AB hydrolase superfamily. In terms of tissue distribution, widely expressed with higher expression in small intestine, liver and brown adipose tissue. In brain, expressed postsynaptically in cortical neurons but not detected in microglia (at protein level).

It is found in the late endosome membrane. Its subcellular location is the lysosome membrane. The protein localises to the mitochondrion membrane. The enzyme catalyses Hydrolyzes glycerol monoesters of long-chain fatty acids.. The catalysed reaction is 2-(5Z,8Z,11Z,14Z-eicosatetraenoyl)-glycerol + H2O = glycerol + (5Z,8Z,11Z,14Z)-eicosatetraenoate + H(+). It carries out the reaction 1-octanoylglycerol + H2O = octanoate + glycerol + H(+). It catalyses the reaction 1-decanoylglycerol + H2O = decanoate + glycerol + H(+). The enzyme catalyses 1-dodecanoylglycerol + H2O = dodecanoate + glycerol + H(+). The catalysed reaction is 1-tetradecanoylglycerol + H2O = tetradecanoate + glycerol + H(+). It carries out the reaction 2-hexadecanoylglycerol + H2O = glycerol + hexadecanoate + H(+). It catalyses the reaction 2-(9Z-octadecenoyl)-glycerol + H2O = glycerol + (9Z)-octadecenoate + H(+). The enzyme catalyses 1-(9Z-octadecenoyl)-glycerol + H2O = glycerol + (9Z)-octadecenoate + H(+). The catalysed reaction is 2-(9Z,12Z-octadecadienoyl)-glycerol + H2O = (9Z,12Z)-octadecadienoate + glycerol + H(+). It carries out the reaction 1-(5Z,8Z,11Z,14Z-eicosatetraenoyl)-glycerol + H2O = glycerol + (5Z,8Z,11Z,14Z)-eicosatetraenoate + H(+). It catalyses the reaction 1-(9Z,12Z-octadecadienoyl)-glycerol + H2O = (9Z,12Z)-octadecadienoate + glycerol + H(+). The enzyme catalyses 3-(9Z-octadecenoyl)-sn-glycero-1-phospho-(3'-(9Z-octadecenoyl)-1'-sn-glycerol) + H2O = 3-(9Z-octadecenoyl)-sn-glycero-1-phospho-(1'-sn-glycerol) + (9Z)-octadecenoate + H(+). The catalysed reaction is (S,S)-2-(9Z-octadecenoyl)-sn-glycero-1-phospho-(2'-(9Z-octadecenoyl)-1'-sn-glycerol) + H2O = (S,S)-2-(9Z-octadecenoyl)-sn-glycero-1-phospho-(1'-sn-glycerol) + (9Z)-octadecenoate + H(+). It carries out the reaction (R,R)-2-(9Z-octadecenoyl)-sn-glycero-3-phospho-(2'-(9Z-octadecenoyl)-3'-sn-glycerol) + H2O = (R,R)-2-(9Z-octadecenoyl)-sn-glycero-3-phospho-(3'-sn-glycerol) + (9Z)-octadecenoate + H(+). Its function is as follows. Lipase that preferentially hydrolysis medium-chain saturated monoacylglycerols including 2-arachidonoylglycerol. Through 2-arachidonoylglycerol degradation may regulate endocannabinoid signaling pathways. Also has a lysophosphatidyl lipase activity with a preference for lysophosphatidylglycerol among other lysophospholipids. Also able to degrade bis(monoacylglycero)phosphate (BMP) and constitutes the major enzyme for BMP catabolism. BMP, also known as lysobisphosphatidic acid, is enriched in late endosomes and lysosomes and plays a key role in the formation of intraluminal vesicles and in lipid sorting. The polypeptide is Monoacylglycerol lipase ABHD6 (Mus musculus (Mouse)).